Consider the following 296-residue polypeptide: ADP-forming sulfoacetate-CoA ligase subunit SqwL (296 aa).

Residues 17–20 (TGSE), lysine 43, and 96–98 (IAD) each bind CoA. Histidine 251 (tele-phosphohistidine intermediate) is an active-site residue.

Belongs to the succinate/malate CoA ligase alpha subunit family. As to quaternary structure, forms a complex with SqwK.

The enzyme catalyses sulfoacetate + ATP + CoA = sulfoacetyl-CoA + ADP + phosphate. In terms of biological role, part of a variant of the sulfo-TK pathway, a D-sulfoquinovose degradation pathway that produces sulfoacetate. Hydrolyzes sulfoacetyl-coenzyme A (sulfoacetyl-CoA) to produce sulfoacetate and CoA coupled with the phosphorylation of ADP to generate ATP. Cannot use succinate, acetate or 3-hydroxypropionate, and shows only residual activities with malonate and 3-sulfopropanoate. The chain is ADP-forming sulfoacetate-CoA ligase subunit SqwL from Acholeplasma sp.